We begin with the raw amino-acid sequence, 4499 residues long: Dynein alpha chain, flagellar outer arm (4499 aa).

The interval 1–1677 (MSIFWEVPNA…RIRICDASFP (1677 aa)) is stem. Kelch repeat units follow at residues 29-84 (RFVL…ALDD), 86-135 (RLLV…RFGS), 137-183 (VFIF…RFDH), 199-245 (KLLI…VCDG), 253-304 (KVFS…FDVK), and 307-358 (SLLI…IRGL). The stretch at 425-534 (FANTAARNCI…IRGSPFTVKC (110 aa)) is one Filamin repeat. Kelch repeat units follow at residues 562-608 (ELVL…VLSD) and 610-661 (ELVV…AVSA). The interval 653–720 (PKGAAAVSAE…SRPVSAKPAP (68 aa)) is disordered. Positions 655–689 (GAAAVSAEPSAEPAAEPAAEPAAEPDADAPAAEPA) are enriched in low complexity. The span at 690 to 705 (AEGEEGAVPAEGEEGA) shows a compositional bias: acidic residues. Kelch repeat units follow at residues 750-801 (LYVM…ATGN) and 864-913 (KLFL…TLSG). Coiled coils occupy residues 1261–1334 (ELHK…MIAN) and 1382–1450 (KKEL…RRAF). AAA regions lie at residues 1678–1921 (YGYE…VLVV) and 1981–2225 (DVIV…KSYS). ATP is bound by residues 1716–1723 (GPAGTGKT) and 2019–2026 (GPTGTGRT). A Kelch 11 repeat occupies 2269-2317 (MIWAFGGGLVEKDGIPYRRNFDKWFKQTWTTVKIPGKGTVYDYFVNPKT). 2 AAA regions span residues 2331 to 2577 (DYDG…VFQG) and 2679 to 2928 (EYNE…ERRY). 2369–2376 (GGAGVGKT) contacts ATP. A coiled-coil region spans residues 2655 to 2688 (LADKAYDEVADYTSLYKTLTEALNEYNETNAAMD). Position 2717–2724 (2717–2724 (GVGGSGKQ)) interacts with ATP. A coiled-coil region spans residues 3003-3023 (VGVEKEKVNAENAAAQVEAEK). The segment at 3003–3262 (VGVEKEKVNA…ERWALTVEQL (260 aa)) is stalk. The Kelch 12 repeat unit spans residues 3070 to 3117 (LKKPPPGVDDITAVVIILLENNPKDKSWQAAQKLMNNVDKFLERVKSF). Coiled coils occupy residues 3170-3262 (DVVQ…VEQL) and 3486-3515 (NKERPDLEETKTQLIIQNTEFTIKLKELED). The interval 3320-3550 (LVDDALVAGW…AKRVSTEISE (231 aa)) is AAA 5. The tract at residues 3614–3687 (GRKKGKGLKK…VGDAEDEDDE (74 aa)) is disordered. The span at 3630–3653 (QPMDHQSLMEKARRSSGVGDRRPS) shows a compositional bias: basic and acidic residues. Residues 3843–4082 (LQNFCEHMMG…LTTCGDVLYN (240 aa)) form an AAA 6 region.

The protein belongs to the dynein heavy chain family. In terms of assembly, consists of at least 3 heavy chains (alpha, beta and gamma), 2 intermediate chains and 8 light chains.

It is found in the cell projection. Its subcellular location is the cilium. The protein localises to the flagellum. It localises to the cytoplasm. The protein resides in the cytoskeleton. It is found in the flagellum axoneme. Functionally, force generating protein of eukaryotic cilia and flagella. Produces force towards the minus ends of microtubules. Dynein has ATPase activity; the force-producing power stroke is thought to occur on release of ADP. This is Dynein alpha chain, flagellar outer arm (ODA11) from Chlamydomonas reinhardtii (Chlamydomonas smithii).